Consider the following 367-residue polypeptide: Peptide chain release factor 2 (367 aa).

Gln254 is modified (N5-methylglutamine).

The protein belongs to the prokaryotic/mitochondrial release factor family. In terms of processing, methylated by PrmC. Methylation increases the termination efficiency of RF2.

It is found in the cytoplasm. In terms of biological role, peptide chain release factor 2 directs the termination of translation in response to the peptide chain termination codons UGA and UAA. The chain is Peptide chain release factor 2 from Burkholderia cenocepacia (strain ATCC BAA-245 / DSM 16553 / LMG 16656 / NCTC 13227 / J2315 / CF5610) (Burkholderia cepacia (strain J2315)).